Here is a 559-residue protein sequence, read N- to C-terminus: Potassium-transporting ATPase potassium-binding subunit (559 aa).

A run of 13 helical transmembrane segments spans residues 5-25 (GFLLIASFLLILLVLAKPLGS), 27-47 (LARLIAAVPLPGVAGVERILW), 63-83 (LLALLTLNLLGLGILFCLLFW), 132-152 (GLTVQNFLSAATGIAVVFALI), 170-190 (LVRITLWILFPVALIIALFFI), 253-273 (LAQMLAIFLIPAALCFAFGEA), 283-303 (LLWAMSFIFVVCVAVVMWAEV), 327-347 (FGVLASSLFAVVTTAASCGAV), 356-376 (ALGGMVPMWLMQIGEVVFGGV), 379-399 (GLYGMLLFVLLAVFIAGLMIG), 416-436 (MTALAILVTPMLVLLGSALAM), 484-504 (LLAFCMFVGRFGVIIPVMAIA), and 524-544 (GALFIGLLIGTVLLVGALTFI).

This sequence belongs to the KdpA family. The system is composed of three essential subunits: KdpA, KdpB and KdpC.

It localises to the cell inner membrane. Its function is as follows. Part of the high-affinity ATP-driven potassium transport (or Kdp) system, which catalyzes the hydrolysis of ATP coupled with the electrogenic transport of potassium into the cytoplasm. This subunit binds the periplasmic potassium ions and delivers the ions to the membrane domain of KdpB through an intramembrane tunnel. The sequence is that of Potassium-transporting ATPase potassium-binding subunit from Salmonella choleraesuis (strain SC-B67).